Consider the following 400-residue polypeptide: Snake venom metalloproteinase H2 (400 aa).

Residues 1-6 (FPYQGS) form the signal peptide. Positions 7-176 (STILESGNVN…KKASQLIVST (170 aa)) are excised as a propeptide. The Peptidase M12B domain maps to 180–377 (RYMEIVIVVD…ENPPCILNKP (198 aa)). Positions 183 and 267 each coordinate Ca(2+). 3 cysteine pairs are disulfide-bonded: Cys291-Cys372, Cys331-Cys356, and Cys333-Cys339. Residue His316 participates in Zn(2+) binding. The active site involves Glu317. Positions 320 and 326 each coordinate Zn(2+). Ca(2+) is bound by residues Cys372, Asn375, Val387, Asn390, Leu392, Glu394, and Asp400. Residues 378-400 (LRTDTVSTPVSGNELLEAGKDYD) constitute a propeptide that is removed on maturation.

It belongs to the venom metalloproteinase (M12B) family. P-I subfamily. Monomer. Zn(2+) serves as cofactor. In terms of tissue distribution, expressed by the venom gland.

The protein localises to the secreted. Functionally, snake venom metalloproteinase that impairs hemostasis in the envenomed animal. In Deinagkistrodon acutus (Hundred-pace snake), this protein is Snake venom metalloproteinase H2.